Reading from the N-terminus, the 207-residue chain is Small ribosomal subunit protein uS4 (207 aa).

The S4 RNA-binding domain occupies 96–159; that stretch reads RRLDNVVYRL…RASTFIADNI (64 aa).

Belongs to the universal ribosomal protein uS4 family. As to quaternary structure, part of the 30S ribosomal subunit. Contacts protein S5. The interaction surface between S4 and S5 is involved in control of translational fidelity.

One of the primary rRNA binding proteins, it binds directly to 16S rRNA where it nucleates assembly of the body of the 30S subunit. In terms of biological role, with S5 and S12 plays an important role in translational accuracy. This Leptospira borgpetersenii serovar Hardjo-bovis (strain JB197) protein is Small ribosomal subunit protein uS4.